Consider the following 136-residue polypeptide: Large ribosomal subunit protein uL16 (136 aa).

It belongs to the universal ribosomal protein uL16 family. In terms of assembly, part of the 50S ribosomal subunit.

In terms of biological role, binds 23S rRNA and is also seen to make contacts with the A and possibly P site tRNAs. The polypeptide is Large ribosomal subunit protein uL16 (Mesomycoplasma hyopneumoniae (strain 232) (Mycoplasma hyopneumoniae)).